Consider the following 170-residue polypeptide: UPF0260 protein RPE_1881 (170 aa).

Belongs to the UPF0260 family.

The protein is UPF0260 protein RPE_1881 of Rhodopseudomonas palustris (strain BisA53).